Reading from the N-terminus, the 981-residue chain is RNA polymerase II assembly factor RTP1 (981 aa).

HEAT repeat units follow at residues 64 to 101 (SNNN…LLPI), 161 to 199 (DTLS…ILLG), 226 to 261 (YTLF…RRPE), 366 to 403 (KELN…TTPG), 609 to 646 (KDVL…GEET), 655 to 692 (SSYK…KLQS), 765 to 799 (ISLE…LCEL), 800 to 836 (EPET…NYIQ), and 945 to 980 (EYNY…VLDS). Residues 630 to 651 (QEVEADSDDEVEEGEETEELDP) show a composition bias toward acidic residues. Positions 630-652 (QEVEADSDDEVEEGEETEELDPN) are disordered.

This sequence belongs to the Tango6 family. Interacts with RNA polymerase II subunits RPB2 and RPB3. Interacts with the R2TP complex. Interacts with the nuclear pore complex subunits NUP100 and NUP116.

The protein localises to the cytoplasm. Functionally, required for the cytoplasmic assembly and the nuclear import of RNA polymerase II. May facilitate the starting interaction between RNA polymerase II subunits RPB2 and RPB3 and the subsequent interaction of the resulting complex with subunit RPB1. May also participate in the transport of RNA polymerase II through the nuclear pore complex. The polypeptide is RNA polymerase II assembly factor RTP1 (Saccharomyces cerevisiae (strain ATCC 204508 / S288c) (Baker's yeast)).